Reading from the N-terminus, the 245-residue chain is Large ribosomal subunit protein uL2 (245 aa).

Residues serine 196 to phenylalanine 226 form a disordered region.

It belongs to the universal ribosomal protein uL2 family. In terms of assembly, part of the 50S ribosomal subunit. Forms a bridge to the 30S subunit in the 70S ribosome.

In terms of biological role, one of the primary rRNA binding proteins. Required for association of the 30S and 50S subunits to form the 70S ribosome, for tRNA binding and peptide bond formation. It has been suggested to have peptidyltransferase activity; this is somewhat controversial. Makes several contacts with the 16S rRNA in the 70S ribosome. The sequence is that of Large ribosomal subunit protein uL2 from Pyrobaculum neutrophilum (strain DSM 2338 / JCM 9278 / NBRC 100436 / V24Sta) (Thermoproteus neutrophilus).